Reading from the N-terminus, the 133-residue chain is Probable non-specific lipid-transfer protein 2 (133 aa).

The first 31 residues, 1-31 (MRTVSMAALVVIAAALAWTSSAEPAPAPAPG), serve as a signal peptide directing secretion. 4 disulfide bridges follow: Cys-35-Cys-83, Cys-45-Cys-60, Cys-61-Cys-106, and Cys-81-Cys-121.

The protein belongs to the plant LTP family.

Its function is as follows. Plant non-specific lipid-transfer proteins transfer phospholipids as well as galactolipids across membranes. May play a role in wax or cutin deposition in the cell walls of expanding epidermal cells and certain secretory tissues. The sequence is that of Probable non-specific lipid-transfer protein 2 from Parietaria judaica (Pellitory-of-the-wall).